The chain runs to 182 residues: CASP-like protein 2B1 (182 aa).

Over 1 to 12 (MKLIDRRMRLTE) the chain is Cytoplasmic. A helical transmembrane segment spans residues 13–31 (LLLRCSISVFALLALILVV). Topologically, residues 32 to 52 (TDTEVKLIFTIKKTAKYTDMK) are extracellular. Residues 53 to 73 (AVVFLVVANGIAAVYSLLQSV) form a helical membrane-spanning segment. Residues 74 to 89 (RCVVGTMKGKVLFSKP) lie on the Cytoplasmic side of the membrane. Residues 90-110 (LAWAFFSGDQAMAYLNVAAIA) form a helical membrane-spanning segment. At 111–141 (ATAESGVIAREGEEDLQWMRVCTMYGKFCNQ) the chain is on the extracellular side. The helical transmembrane segment at 142 to 162 (MAIGVSSALLASIAMVFVSCI) threads the bilayer. At 163–182 (SAFSLFRLYGATKDRRTTPW) the chain is on the cytoplasmic side.

Belongs to the Casparian strip membrane proteins (CASP) family. As to quaternary structure, homodimer and heterodimers.

It localises to the cell membrane. The protein is CASP-like protein 2B1 of Arabidopsis thaliana (Mouse-ear cress).